The sequence spans 307 residues: tRNA dimethylallyltransferase (307 aa).

ATP is bound at residue 16-23; the sequence is GCTAVGKT. 18 to 23 serves as a coordination point for substrate; it reads TAVGKT. The tract at residues 41 to 44 is interaction with substrate tRNA; the sequence is DSLL.

It belongs to the IPP transferase family. In terms of assembly, monomer. Mg(2+) serves as cofactor.

The enzyme catalyses adenosine(37) in tRNA + dimethylallyl diphosphate = N(6)-dimethylallyladenosine(37) in tRNA + diphosphate. In terms of biological role, catalyzes the transfer of a dimethylallyl group onto the adenine at position 37 in tRNAs that read codons beginning with uridine, leading to the formation of N6-(dimethylallyl)adenosine (i(6)A). The chain is tRNA dimethylallyltransferase from Opitutus terrae (strain DSM 11246 / JCM 15787 / PB90-1).